Here is a 299-residue protein sequence, read N- to C-terminus: GTPase Era (299 aa).

Residues 5–175 (RSGFVCFVGR…TDVLAGKLPP (171 aa)) enclose the Era-type G domain. A G1 region spans residues 13–20 (GRPNTGKS). Residue 13-20 (GRPNTGKS) participates in GTP binding. Residues 39–43 (QTTRH) are G2. Residues 60-63 (DTPG) are G3. Residues 60–64 (DTPGL) and 124–127 (TKID) contribute to the GTP site. Positions 124–127 (TKID) are G4. The interval 154–156 (VSA) is G5. Residues 206 to 285 (VRDELPHSLA…YLDLRVKIAK (80 aa)) enclose the KH type-2 domain.

Belongs to the TRAFAC class TrmE-Era-EngA-EngB-Septin-like GTPase superfamily. Era GTPase family. As to quaternary structure, monomer.

It localises to the cell envelope. It is found in the secreted. Its subcellular location is the cell wall. In terms of biological role, exhibits GTPase activity. Binds RNA but is probably not involved in ribosome assembly in mycobacteria. This Mycobacterium sp. (strain KMS) protein is GTPase Era.